A 254-amino-acid chain; its full sequence is 3-deoxy-manno-octulosonate cytidylyltransferase (254 aa).

Belongs to the KdsB family.

It is found in the cytoplasm. It carries out the reaction 3-deoxy-alpha-D-manno-oct-2-ulosonate + CTP = CMP-3-deoxy-beta-D-manno-octulosonate + diphosphate. The protein operates within nucleotide-sugar biosynthesis; CMP-3-deoxy-D-manno-octulosonate biosynthesis; CMP-3-deoxy-D-manno-octulosonate from 3-deoxy-D-manno-octulosonate and CTP: step 1/1. Its pathway is bacterial outer membrane biogenesis; lipopolysaccharide biosynthesis. Activates KDO (a required 8-carbon sugar) for incorporation into bacterial lipopolysaccharide in Gram-negative bacteria. This is 3-deoxy-manno-octulosonate cytidylyltransferase from Pseudomonas syringae pv. syringae (strain B728a).